A 450-amino-acid polypeptide reads, in one-letter code: Ribulose bisphosphate carboxylase large chain (450 aa).

N6,N6,N6-trimethyllysine is present on lysine 4. Asparagine 113 and threonine 163 together coordinate substrate. Lysine 165 functions as the Proton acceptor in the catalytic mechanism. Lysine 167 serves as a coordination point for substrate. The Mg(2+) site is built by lysine 191, aspartate 193, and glutamate 194. Lysine 191 is subject to N6-carboxylysine. Histidine 284 functions as the Proton acceptor in the catalytic mechanism. Residues arginine 285, histidine 317, and serine 369 each contribute to the substrate site.

Belongs to the RuBisCO large chain family. Type I subfamily. In terms of assembly, heterohexadecamer of 8 large chains and 8 small chains; disulfide-linked. The disulfide link is formed within the large subunit homodimers. Mg(2+) is required as a cofactor. Post-translationally, the disulfide bond which can form in the large chain dimeric partners within the hexadecamer appears to be associated with oxidative stress and protein turnover.

It is found in the plastid. Its subcellular location is the chloroplast. The enzyme catalyses 2 (2R)-3-phosphoglycerate + 2 H(+) = D-ribulose 1,5-bisphosphate + CO2 + H2O. It catalyses the reaction D-ribulose 1,5-bisphosphate + O2 = 2-phosphoglycolate + (2R)-3-phosphoglycerate + 2 H(+). Functionally, ruBisCO catalyzes two reactions: the carboxylation of D-ribulose 1,5-bisphosphate, the primary event in carbon dioxide fixation, as well as the oxidative fragmentation of the pentose substrate in the photorespiration process. Both reactions occur simultaneously and in competition at the same active site. The sequence is that of Ribulose bisphosphate carboxylase large chain from Crassula rupestris subsp. marnieriana (Pygmyweed).